A 464-amino-acid chain; its full sequence is Argininosuccinate lyase (464 aa).

It belongs to the lyase 1 family. Argininosuccinate lyase subfamily.

Its subcellular location is the cytoplasm. It catalyses the reaction 2-(N(omega)-L-arginino)succinate = fumarate + L-arginine. The protein operates within amino-acid biosynthesis; L-arginine biosynthesis; L-arginine from L-ornithine and carbamoyl phosphate: step 3/3. The polypeptide is Argininosuccinate lyase (Pseudomonas putida (strain W619)).